A 1199-amino-acid polypeptide reads, in one-letter code: DNA-directed RNA polymerase subunit beta (1199 aa).

The disordered stretch occupies residues 1175 to 1199 (EEKKAHEAAAQATDGKSANSTDDKK). Polar residues predominate over residues 1188 to 1199 (DGKSANSTDDKK).

The protein belongs to the RNA polymerase beta chain family. The RNAP catalytic core consists of 2 alpha, 1 beta, 1 beta' and 1 omega subunit. When a sigma factor is associated with the core the holoenzyme is formed, which can initiate transcription.

The enzyme catalyses RNA(n) + a ribonucleoside 5'-triphosphate = RNA(n+1) + diphosphate. In terms of biological role, DNA-dependent RNA polymerase catalyzes the transcription of DNA into RNA using the four ribonucleoside triphosphates as substrates. In Lacticaseibacillus paracasei (strain ATCC 334 / BCRC 17002 / CCUG 31169 / CIP 107868 / KCTC 3260 / NRRL B-441) (Lactobacillus paracasei), this protein is DNA-directed RNA polymerase subunit beta.